Reading from the N-terminus, the 272-residue chain is L-aminoadipate-semialdehyde dehydrogenase-phosphopantetheinyl transferase (272 aa).

Belongs to the P-Pant transferase superfamily. AcpS family.

The catalysed reaction is apo-[ACP] + CoA = holo-[ACP] + adenosine 3',5'-bisphosphate + H(+). Catalyzes the transfer of a 4'-phosphopantetheine moiety from coenzyme A to a serine residue of acceptor proteins, such as alpha-aminoadipate reductase. Necessary for alpha-aminoadipate reductase activity. This chain is L-aminoadipate-semialdehyde dehydrogenase-phosphopantetheinyl transferase, found in Saccharomyces cerevisiae (strain ATCC 204508 / S288c) (Baker's yeast).